A 201-amino-acid chain; its full sequence is Protein LIGHT-DEPENDENT SHORT HYPOCOTYLS 2 (201 aa).

Residues 1–14 show a composition bias toward polar residues; sequence MDLISQNHNNRNPN. Disordered stretches follow at residues 1–37 and 151–201; these read MDLI…YENQ and SRGV…GATQ. Over residues 15-32 the composition is skewed to low complexity; it reads TSLSTQTPSSFSSPPSSS. In terms of domain architecture, ALOG spans 33–160; it reads RYENQKRRDW…SRGVSYEKKR (128 aa). Positions 158–162 match the Nuclear localization signal motif; the sequence is KKRKR.

The protein belongs to the plant homeotic and developmental regulators ALOG protein family.

The protein localises to the nucleus. In terms of biological role, probable transcription regulator that acts as a developmental regulator by promoting cell growth in response to light. The protein is Protein LIGHT-DEPENDENT SHORT HYPOCOTYLS 2 (LSH2) of Arabidopsis thaliana (Mouse-ear cress).